Here is a 406-residue protein sequence, read N- to C-terminus: Tryptophan synthase beta chain (406 aa).

Lys99 carries the N6-(pyridoxal phosphate)lysine modification.

This sequence belongs to the TrpB family. As to quaternary structure, tetramer of two alpha and two beta chains. Requires pyridoxal 5'-phosphate as cofactor.

It catalyses the reaction (1S,2R)-1-C-(indol-3-yl)glycerol 3-phosphate + L-serine = D-glyceraldehyde 3-phosphate + L-tryptophan + H2O. It participates in amino-acid biosynthesis; L-tryptophan biosynthesis; L-tryptophan from chorismate: step 5/5. Its function is as follows. The beta subunit is responsible for the synthesis of L-tryptophan from indole and L-serine. The sequence is that of Tryptophan synthase beta chain from Brucella anthropi (strain ATCC 49188 / DSM 6882 / CCUG 24695 / JCM 21032 / LMG 3331 / NBRC 15819 / NCTC 12168 / Alc 37) (Ochrobactrum anthropi).